The following is a 411-amino-acid chain: Protrudin (411 aa).

Positions methionine 1–proline 27 are disordered. Residues methionine 1–arginine 66 lie on the Cytoplasmic side of the membrane. The segment at methionine 1–tryptophan 92 is sufficient for homooligomerization. The interval methionine 1 to leucine 205 is sufficient for localization to endoplasmic reticulum tubular network and for interactions with REEP1, REEP5, ATL1, ATL2, ATL3 and SPAST. Positions leucine 51–leucine 64 are necessary for interaction with RAB11A and function in neurite outgrowth. A helical transmembrane segment spans residues tryptophan 67–leucine 87. Position 88 (asparagine 88) is a topological domain, lumenal. The helical transmembrane segment at glutamate 89–leucine 109 threads the bilayer. The Cytoplasmic portion of the chain corresponds to glutamine 110–glycine 187. The segment at residues alanine 188–leucine 208 is an intramembrane region (helical). Residues asparagine 209–lysine 411 are Cytoplasmic-facing. The disordered stretch occupies residues methionine 234–glutamate 286. The segment at threonine 271–lysine 361 is necessary for interaction with KIF5A. Over residues glutamate 276–glutamate 286 the composition is skewed to acidic residues. The segment at glutamate 286 to glutamate 292 is necessary for interaction with VAPA and function in cell projections formation. The FYVE-type zinc finger occupies threonine 344 to serine 410. Residues cysteine 350, cysteine 353, cysteine 366, cysteine 369, cysteine 374, cysteine 377, cysteine 402, and cysteine 405 each coordinate Zn(2+).

Can form homooligomers (monomers, dimers and tetramers). Interacts with RAB11A (GDP-bound form); regulates RAB11A. Interacts with FKBP8; may negatively regulate ZFYVE27 phosphorylation. Interacts with VAPA (via MSP domain); may regulate ZFYVE27 retention in the endoplasmic reticulum and its function in cell projections formation. Interacts with VAPB (via MSP domain). Interacts with REEP1, REEP5 and ATL1. Interacts with ATL2, ATL3 and SPAST. Interacts with KIF5A and RTN3. Interacts with RAB11B (GDP-bound form), SURF4, KIF5B and KIF5C. In terms of processing, phosphorylated. Phosphorylation is induced by NGF through the MAPK/ERK pathway and modulates interaction with RAB11A.

The protein localises to the recycling endosome membrane. Its subcellular location is the endoplasmic reticulum membrane. It localises to the cell projection. It is found in the growth cone membrane. In terms of biological role, key regulator of RAB11-dependent vesicular trafficking during neurite extension through polarized membrane transport. Promotes axonal elongation and contributes to the establishment of neuronal cell polarity. Involved in nerve growth factor-induced neurite formation in VAPA-dependent manner. Contributes to both the formation and stabilization of the tubular ER network. Involved in ER morphogenesis by regulating the sheet-to-tubule balance and possibly the density of tubule interconnections. Acts as an adapter protein and facilitates the interaction of KIF5A with VAPA, VAPB, SURF4, RAB11A, RAB11B and RTN3 and the ZFYVE27-KIF5A complex contributes to the transport of these proteins in neurons. Can induce formation of neurite-like membrane protrusions in non-neuronal cells in a KIF5A/B-dependent manner. The protein is Protrudin (ZFYVE27) of Homo sapiens (Human).